We begin with the raw amino-acid sequence, 257 residues long: Imidazole glycerol phosphate synthase subunit HisF (257 aa).

Residues D12 and D131 contribute to the active site.

This sequence belongs to the HisA/HisF family. Heterodimer of HisH and HisF.

It localises to the cytoplasm. The enzyme catalyses 5-[(5-phospho-1-deoxy-D-ribulos-1-ylimino)methylamino]-1-(5-phospho-beta-D-ribosyl)imidazole-4-carboxamide + L-glutamine = D-erythro-1-(imidazol-4-yl)glycerol 3-phosphate + 5-amino-1-(5-phospho-beta-D-ribosyl)imidazole-4-carboxamide + L-glutamate + H(+). Its pathway is amino-acid biosynthesis; L-histidine biosynthesis; L-histidine from 5-phospho-alpha-D-ribose 1-diphosphate: step 5/9. IGPS catalyzes the conversion of PRFAR and glutamine to IGP, AICAR and glutamate. The HisF subunit catalyzes the cyclization activity that produces IGP and AICAR from PRFAR using the ammonia provided by the HisH subunit. The chain is Imidazole glycerol phosphate synthase subunit HisF from Paraburkholderia phymatum (strain DSM 17167 / CIP 108236 / LMG 21445 / STM815) (Burkholderia phymatum).